Consider the following 89-residue polypeptide: Small ribosomal subunit protein uS15 (89 aa).

This sequence belongs to the universal ribosomal protein uS15 family. Part of the 30S ribosomal subunit. Forms a bridge to the 50S subunit in the 70S ribosome, contacting the 23S rRNA.

One of the primary rRNA binding proteins, it binds directly to 16S rRNA where it helps nucleate assembly of the platform of the 30S subunit by binding and bridging several RNA helices of the 16S rRNA. In terms of biological role, forms an intersubunit bridge (bridge B4) with the 23S rRNA of the 50S subunit in the ribosome. In Trichormus variabilis (strain ATCC 29413 / PCC 7937) (Anabaena variabilis), this protein is Small ribosomal subunit protein uS15.